A 236-amino-acid chain; its full sequence is 5'-methylthioadenosine/S-adenosylhomocysteine nucleosidase (236 aa).

Glu-12 (proton acceptor) is an active-site residue. Residues Gly-78, Ile-153, and Met-174–Glu-175 each bind substrate. Residue Asp-198 is the Proton donor of the active site.

This sequence belongs to the PNP/UDP phosphorylase family. MtnN subfamily.

The catalysed reaction is S-adenosyl-L-homocysteine + H2O = S-(5-deoxy-D-ribos-5-yl)-L-homocysteine + adenine. The enzyme catalyses S-methyl-5'-thioadenosine + H2O = 5-(methylsulfanyl)-D-ribose + adenine. It carries out the reaction 5'-deoxyadenosine + H2O = 5-deoxy-D-ribose + adenine. Its pathway is amino-acid biosynthesis; L-methionine biosynthesis via salvage pathway; S-methyl-5-thio-alpha-D-ribose 1-phosphate from S-methyl-5'-thioadenosine (hydrolase route): step 1/2. In terms of biological role, catalyzes the irreversible cleavage of the glycosidic bond in both 5'-methylthioadenosine (MTA) and S-adenosylhomocysteine (SAH/AdoHcy) to adenine and the corresponding thioribose, 5'-methylthioribose and S-ribosylhomocysteine, respectively. Also cleaves 5'-deoxyadenosine, a toxic by-product of radical S-adenosylmethionine (SAM) enzymes, into 5-deoxyribose and adenine. This chain is 5'-methylthioadenosine/S-adenosylhomocysteine nucleosidase, found in Shewanella baltica (strain OS185).